The following is a 574-amino-acid chain: Zinc finger and BTB domain-containing protein 3 (574 aa).

One can recognise a BTB domain in the interval 74-142 (CDCTVMVGST…MYAGQLTLRG (69 aa)). Disordered regions lie at residues 175 to 277 (AEAD…SSTE) and 305 to 346 (SLRV…APAP). Glycyl lysine isopeptide (Lys-Gly) (interchain with G-Cter in SUMO2) cross-links involve residues Lys-181 and Lys-182. Over residues 187–212 (NSQLPSLEFLSSTSRGTQPSLASAET) the composition is skewed to polar residues. The span at 323 to 334 (PPASAPTSAPAP) shows a compositional bias: low complexity. Phosphoserine is present on Ser-362. Residues 364 to 403 (EETDVSDEQPQGPERAFPSGGAVYGAQPSQPEAFEDPGAA) are disordered. C2H2-type zinc fingers lie at residues 472–494 (PTCK…ATVH) and 500–523 (YECR…RKAH). A compositionally biased stretch (basic and acidic residues) spans 526–535 (DLAKRSKPDP). A disordered region spans residues 526–574 (DLAKRSKPDPEVGPLLGVQPLPGSPTADRQSSSGGGPPKDFVLAPKTNI). Lys-532 participates in a covalent cross-link: Glycyl lysine isopeptide (Lys-Gly) (interchain with G-Cter in SUMO2). Position 549 is a phosphoserine (Ser-549).

The protein localises to the nucleus. Its function is as follows. May be involved in transcriptional regulation. The polypeptide is Zinc finger and BTB domain-containing protein 3 (ZBTB3) (Homo sapiens (Human)).